Consider the following 33-residue polypeptide: MLFEIFEELEINREIRNLAYEFVKKMVYCQMTL.

This is an uncharacterized protein from Archaeoglobus fulgidus (strain ATCC 49558 / DSM 4304 / JCM 9628 / NBRC 100126 / VC-16).